Reading from the N-terminus, the 204-residue chain is Putative AgrB-like protein (204 aa).

The next 5 membrane-spanning stretches (helical) occupy residues 51 to 73, 87 to 107, 111 to 131, 151 to 168, and 173 to 190; these read VYGI…SYLW, LNCT…FQNI, NWIV…FAPA, AMIG…IPFA, and LIMV…PLTY.

It belongs to the AgrB family.

Its subcellular location is the cell membrane. In terms of biological role, may be involved in the proteolytic processing of a quorum sensing system signal molecule precursor. The polypeptide is Putative AgrB-like protein (Listeria innocua serovar 6a (strain ATCC BAA-680 / CLIP 11262)).